Here is a 3856-residue protein sequence, read N- to C-terminus: Hybrid PKS-NRPS synthetase traA (3856 aa).

A Ketosynthase family 3 (KS3) domain is found at 6 to 438 (PEPIAIVGSG…GTNGHAILEE (433 aa)). Catalysis depends on for beta-ketoacyl synthase activity residues C179, H318, and H358. The interval 554 to 885 (IFTGQGAQWA…FSDALGFVWT (332 aa)) is malonyl-CoA:ACP transacylase (MAT) domain. The segment at 943 to 1081 (HELLGVPSPN…GKVTVIYGTP (139 aa)) is N-terminal hotdog fold. The tract at residues 943–1247 (HELLGVPSPN…LSMKPFSPAT (305 aa)) is dehydratase (DH) domain. The region spanning 943–1249 (HELLGVPSPN…MKPFSPATAD (307 aa)) is the PKS/mFAS DH domain. H975 serves as the catalytic Proton acceptor; for dehydratase activity. Positions 1096-1249 (MVDIQAEQFY…MKPFSPATAD (154 aa)) are C-terminal hotdog fold. The active-site Proton donor; for dehydratase activity is the D1156. The tract at residues 1290 to 1456 (LACVAQQIVH…RKAGFSGIDS (167 aa)) is methyltransferase (MT) domain. A ketoreductase (KR) domain region spans residues 1984-2158 (TYVLVGLSGR…ATSLDIGSIV (175 aa)). The region spanning 2266–2347 (ADALEILKEL…TLCQQALEKL (82 aa)) is the Carrier 1 domain. S2307 is subject to O-(pantetheine 4'-phosphoryl)serine. A disordered region spans residues 2351-2422 (ILPNVESGGP…SSTPATVLSN (72 aa)). 2 stretches are compositionally biased toward low complexity: residues 2357–2369 (SGGPSKTGSSKPT) and 2399–2418 (TTSPQSTLSSDQSPSSTPAT). Residues 2446–2884 (VKTELVSFQQ…FALFSDKELK (439 aa)) are condensation (C) domain. Residues 2910–3310 (QIAKENDDKV…GAMVFHNRIA (401 aa)) are adenylation (A) domain. The tract at residues 3403–3429 (SKTDRKALKELPLPQRSNHDTGDNTES) is disordered. The Carrier 2 domain occupies 3428 to 3507 (ESLTETMLEL…DMTQKIEESL (80 aa)). S3467 carries the post-translational modification O-(pantetheine 4'-phosphoryl)serine. The tract at residues 3544-3768 (VTGSGGFLGK…EMTPIHSAAS (225 aa)) is reductase (R) domain.

The protein in the C-terminal section; belongs to the NRP synthetase family.

It participates in secondary metabolite biosynthesis. Hybrid PKS-NRPS synthetase; part of the tra gene cluster that produces terrestric acid. The clavatol biosynthesis cluster cla and the terrestric acid cluster tra are both involved in the production of peniphenones and penilactones. The non-reducing PKS claF is responsible for the formation of clavatol from successive condensations of 3 malonyl-CoA units, presumably with a simple acetyl-CoA starter unit, and 2 methylation steps. The esterase claE probably collaborates with claF by catalyzing the hydrolysis of ACP-bound acyl intermediates to free the ACP from stalled intermediates. The clavatol oxidase claD then converts clavatol to hydroxyclavatol. Spontaneous dehydration of hydroxyclavatol leads to the accumulation of the highly active ortho-quinone methide. On the other hand, the PKS-NRPS hybrid traA is involved in the formation of crustosic acid, with the help of traB and traD. The polyketide synthase module (PKS) of traA is responsible for the synthesis of the polyketide backbone via the condensation of an acetyl-CoA starter unit with 3 malonyl-CoA units. The downstream nonribosomal peptide synthetase (NRPS) module then amidates the carboxyl end of the polyketide with L-malic acid. Because traA lacks a designated enoylreductase (ER) domain, the required activity is provided the enoyl reductase traG. Crustosic acid undergoes decarboxylation and isomerization to the terrestric acid, catalyzed by the 2-oxoglutarate-dependent dioxygenase traH. Both acids are further converted to the 2 gamma-butyrolactones (R)-5-methyltetronic acid and (S)-5-carboxylmethyltetronic acid, with involvement of the cytochrome P450 monooxygenase claJ. Spontaneous addition of the methide to these gamma-butyrolactones leads to peniphenone D and penilactone D, which undergo again stereospecific attacking by methide to give penilactones A and B. This chain is Hybrid PKS-NRPS synthetase traA, found in Penicillium crustosum (Blue mold fungus).